Here is a 139-residue protein sequence, read N- to C-terminus: MGVVSISMPDELEERIDTFADEHGYTGRSEVVREAVRNLMGEFEDKRLEDRELMAVVTVLFDYETTTVEEKMMHLRHDHESIVASNFHSHVGDRYCMELFVLEGQLEDISAFVGKVRATKDTLSVDYSVLPVDDINMFT.

Residues His-77, His-88, His-90, and Cys-96 each coordinate Ni(2+).

This sequence belongs to the transcriptional regulatory CopG/NikR family. Ni(2+) is required as a cofactor.

In terms of biological role, transcriptional regulator. In Haloarcula marismortui (strain ATCC 43049 / DSM 3752 / JCM 8966 / VKM B-1809) (Halobacterium marismortui), this protein is Putative nickel-responsive regulator.